We begin with the raw amino-acid sequence, 630 residues long: DNA mismatch repair protein MutL (630 aa).

The protein belongs to the DNA mismatch repair MutL/HexB family.

In terms of biological role, this protein is involved in the repair of mismatches in DNA. It is required for dam-dependent methyl-directed DNA mismatch repair. May act as a 'molecular matchmaker', a protein that promotes the formation of a stable complex between two or more DNA-binding proteins in an ATP-dependent manner without itself being part of a final effector complex. This Lactobacillus johnsonii (strain CNCM I-12250 / La1 / NCC 533) protein is DNA mismatch repair protein MutL.